Consider the following 762-residue polypeptide: MLALRRFILNQRSLRSCTIPILVGALIIILVLFQLVTHRNDALIRSSNVNSTNKKTLKDADPKVLIEAFGSPEVDPVDTIPVSPLELVPFYDQSIDTKRSSSWLINKKGYYKHFNELSLTDRCKFYFRTLYTLDDEWTNSVKKLEYSINDNEGVDEGKDANGNPMDEKSERLYRRKYDMFQAFERIRAYDRCFMQANPVNIQEIFPKSDKMSKERVQSKLIKTLNATFPNYDPDNFKKYDQFEFEHKMFPFINNFTTETFHEMVPKITSPFGKVLEQGFLPKFDHKTGKVQEYFKYEYDPSKTFWANWRDMSAKVAGRGIVLSLGSNQFPLAVKFIASLRFEGNTLPIQVVYRGDELSQELVDKLIYAARSPDFKPVENNYDNSTNVPQEIWFLDVSNTIHPKWRGDFGSYKSKWLVVLLNLLQEFVFLDIDAISYEKIDNYFKTTEYQKTGTVFYRERALRENVNERCIARYETLLPRNLESKNFQNSLLIDPDHALNECDNTLTTEEYIFKAFFHHRRQHQLEAGLFAVDKSKHTIPLVLAAMIHLAKNTAHCTHGDKENFWLGFLAAGHTYALQGVYSGAIGDYVKKTDLNGKRQEAAVEICSGQIAHMSTDKKTLLWVNGGGTFCKHDNAAKDDWKKDGDFKKFKDQFKTFEEMEKYYYITPISSKYVILPDPKSDDWHRASAGACGGYIWCATHKTLLKPYSYNHRTTHGELITLDEEQRLHIDAVNTVWSHANKDNTRSFTEEEIKELENSRHEQS.

Residues 1–16 (MLALRRFILNQRSLRS) are Cytoplasmic-facing. A helical; Signal-anchor for type II membrane protein transmembrane segment spans residues 17-33 (CTIPILVGALIIILVLF). The Lumenal segment spans residues 34–762 (QLVTHRNDAL…ELENSRHEQS (729 aa)). 4 N-linked (GlcNAc...) asparagine glycosylation sites follow: Asn-50, Asn-225, Asn-254, and Asn-383.

This sequence belongs to the MNN1/MNT family.

The protein localises to the golgi apparatus membrane. It functions in the pathway protein modification; protein glycosylation. Responsible for addition of the terminal mannose residues to the outer chain of core N-linked polysaccharides and to O-linked mannotriose. Implicated in late Golgi modifications. The protein is Alpha-1,3-mannosyltransferase MNN1 (MNN1) of Saccharomyces cerevisiae (strain ATCC 204508 / S288c) (Baker's yeast).